Consider the following 213-residue polypeptide: Histone H1.2 (213 aa).

Residues 1-17 show a composition bias toward low complexity; that stretch reads MSETAPAAPAAAPPAEK. A disordered region spans residues 1–41; that stretch reads MSETAPAAPAAAPPAEKTPVKKKAAKKPAGARRKASGPPVS. S2 bears the N-acetylserine; partial mark. S2 is modified (phosphoserine). At K17 the chain carries N6-acetyllysine. The span at 20–35 shows a compositional bias: basic residues; sequence VKKKAAKKPAGARRKA. N6-(2-hydroxyisobutyryl)lysine occurs at positions 23, 26, and 27. At K34 the chain carries N6-(beta-hydroxybutyryl)lysine; alternate. At K34 the chain carries N6-crotonyllysine; alternate. K34 is modified (N6-methyllysine; alternate). Positions 36-109 constitute an H15 domain; the sequence is SGPPVSELIT…GASGSFKLNK (74 aa). The residue at position 46 (K46) is an N6-(2-hydroxyisobutyryl)lysine. K52 bears the N6-(beta-hydroxybutyryl)lysine; alternate mark. K52 bears the N6-(2-hydroxyisobutyryl)lysine; alternate mark. R54 bears the Citrulline mark. Position 63 is an N6-(2-hydroxyisobutyryl)lysine (K63). K64 carries the post-translational modification N6-(beta-hydroxybutyryl)lysine; alternate. An N6-crotonyllysine; alternate modification is found at K64. The residue at position 64 (K64) is an N6-(2-hydroxyisobutyryl)lysine; alternate. An N6-(2-hydroxyisobutyryl)lysine mark is found at K75 and K81. An N6-(beta-hydroxybutyryl)lysine; alternate mark is found at K85 and K90. Residues K85, K90, and K97 each carry the N6-crotonyllysine; alternate modification. 3 positions are modified to N6-(2-hydroxyisobutyryl)lysine; alternate: K85, K90, and K97. The tract at residues 95–213 is disordered; that stretch reads QTKGTGASGS…KPKKAAPKKK (119 aa). At K97 the chain carries N6-succinyllysine; alternate. S104 is subject to Phosphoserine; by PKC. N6-(beta-hydroxybutyryl)lysine is present on K106. K110, K117, K121, K129, and K136 each carry N6-(2-hydroxyisobutyryl)lysine. A compositionally biased stretch (basic residues) spans 119-140; sequence KAKKAGAAKPKKAAGAAKKTKK. T146 is subject to Phosphothreonine. Residue K148 is modified to N6-(2-hydroxyisobutyryl)lysine. The segment covering 149-160 has biased composition (basic residues); sequence KTAKKTPKKAKK. K159 and K168 each carry N6-crotonyllysine; alternate. N6-(2-hydroxyisobutyryl)lysine; alternate occurs at positions 159 and 168. Positions 169–186 are enriched in basic residues; sequence KVAKSPKKAKAAKPKKAA. N6-methyllysine; by EHMT1 and EHMT2 is present on K187. S188 is modified (ADP-ribosylserine). A compositionally biased stretch (basic residues) spans 193-213; the sequence is VKPKAAKPKVAKPKKAAPKKK.

This sequence belongs to the histone H1/H5 family. Post-translationally, H1 histones are progressively phosphorylated during the cell cycle, becoming maximally phosphorylated during late G2 phase and M phase, and being dephosphorylated sharply thereafter. Crotonylation (Kcr) is specifically present in male germ cells and marks testis-specific genes in post-meiotic cells, including X-linked genes that escape sex chromosome inactivation in haploid cells. Crotonylation marks active promoters and enhancers and confers resistance to transcriptional repressors. It is also associated with post-meiotically activated genes on autosomes. In terms of processing, ADP-ribosylated on Ser-188 in response to DNA damage. Post-translationally, citrullination at Arg-54 (H1R54ci) by PADI4 takes place within the DNA-binding site of H1 and results in its displacement from chromatin and global chromatin decondensation, thereby promoting pluripotency and stem cell maintenance.

Its subcellular location is the nucleus. It localises to the chromosome. Functionally, histone H1 protein binds to linker DNA between nucleosomes forming the macromolecular structure known as the chromatin fiber. Histones H1 are necessary for the condensation of nucleosome chains into higher-order structured fibers. Also acts as a regulator of individual gene transcription through chromatin remodeling, nucleosome spacing and DNA methylation. The protein is Histone H1.2 of Bos taurus (Bovine).